A 424-amino-acid chain; its full sequence is UPF0761 membrane protein Smlt0865 (424 aa).

A run of 6 helical transmembrane segments spans residues valine 48–phenylalanine 68, serine 101–leucine 121, phenylalanine 144–valine 164, tryptophan 181–leucine 201, alanine 216–alanine 236, and valine 251–glycine 271.

The protein belongs to the UPF0761 family.

The protein resides in the cell inner membrane. This chain is UPF0761 membrane protein Smlt0865, found in Stenotrophomonas maltophilia (strain K279a).